The following is a 650-amino-acid chain: Putative pumilio homolog 7, chloroplastic (650 aa).

2 disordered regions span residues 1–22 (MDEFREASSVSSSPSTPLRTPL) and 200–235 (NDDKRNMFGNNPQQFGWPSYSSSNSGTSPYNNGQEI). A chloroplast-targeting transit peptide spans 1–77 (MDEFREASSV…SPPFNGIIPK (77 aa)). 2 stretches are compositionally biased toward low complexity: residues 8-22 (SSVSSSPSTPLRTPL) and 217-232 (PSYSSSNSGTSPYNNG). In terms of domain architecture, PUM-HD spans 308–650 (SNTRALMSNN…RIFSRNLLKK (343 aa)). Pumilio repeat units lie at residues 333 to 368 (DIQGYVYLMAKDQHGCRFLQRIFDEGTSVDAMIIFN), 369 to 404 (EVIAHVVELMMDPFGNYLMQKLLDVCTEEQRTQIVL), 408 to 443 (EEPGQLIRISLNAYGTRVVQRLVETIRSGKQISLVK), 445 to 480 (ALRPGFLDLIKDLNGNHVIQRCLQCLSTEDNKFIFD), 481 to 516 (AATKFCTEIATHRHGCCVLQKCIAYSMRQQREKLIA), 517 to 552 (EISRNSLLLAQDPFGNYAVQFVIELRIPSAVAMMLA), 553 to 591 (QLKGHYVQLSMQKFSSHMVERCLMHCPESRPQIVRELVS), and 594 to 625 (HFDQLLQDPYANFVIQAALAATKGPLHASLVE).

The protein resides in the plastid. It is found in the chloroplast. It localises to the cytoplasm. Functionally, sequence-specific RNA-binding protein that regulates translation and mRNA stability by binding the 3'-UTR of target mRNAs. In Arabidopsis thaliana (Mouse-ear cress), this protein is Putative pumilio homolog 7, chloroplastic (APUM7).